The sequence spans 767 residues: U3 small nucleolar RNA-associated protein 14 homolog A (767 aa).

The segment at 23-49 (TSNYPLSASEDEGDSDGERKHQKLLEA) is disordered. Serine 29, serine 31, serine 37, serine 52, serine 77, and serine 81 each carry phosphoserine. Residue lysine 122 forms a Glycyl lysine isopeptide (Lys-Gly) (interchain with G-Cter in SUMO2) linkage. Threonine 205 is modified (phosphothreonine). A coiled-coil region spans residues 317 to 346 (LEARQAMQEQLAKNKELTQKLQVVSESEEE). The interval 338–554 (QVVSESEEEG…SKGKNKKEQM (217 aa)) is disordered. The span at 342-355 (ESEEEGGADEEEAL) shows a compositional bias: acidic residues. Positions 398 to 433 (AAHEFPENEENDKPVAEEDELLKELEKRRSLRKRSE) are enriched in basic and acidic residues. Residue arginine 431 is modified to Citrulline. Lysine 447 is covalently cross-linked (Glycyl lysine isopeptide (Lys-Gly) (interchain with G-Cter in SUMO2)). Residue serine 451 is modified to Phosphoserine. Over residues 486–498 (VWEEEPAPEEDEP) the composition is skewed to acidic residues. The span at 503–538 (RPERMRTLEELEELGKEDSLPNKERPRPSVEGEQVR) shows a compositional bias: basic and acidic residues. Residue lysine 518 forms a Glycyl lysine isopeptide (Lys-Gly) (interchain with G-Cter in SUMO2) linkage. Position 586 is a citrulline (arginine 586). The tract at residues 730 to 767 (TAEDVDCRSSPRSDVPVMQSNPKQHSKHQKQRKKSSIG) is disordered. Basic residues predominate over residues 753–767 (QHSKHQKQRKKSSIG).

Belongs to the UTP14 family. In terms of assembly, interacts with DHX37. Citrullinated by PADI4. As to expression, ubiquitously expressed.

It is found in the nucleus. Its subcellular location is the nucleolus. In terms of biological role, may be required for ribosome biogenesis. This Mus musculus (Mouse) protein is U3 small nucleolar RNA-associated protein 14 homolog A (Utp14a).